Here is an 854-residue protein sequence, read N- to C-terminus: DNA topoisomerase 1 type prokaryotic (854 aa).

The region spanning 2–110 is the Toprim domain; sequence SILILLESPG…KRLRFNAITK (109 aa). Residues Glu-8 and Asp-79 each contribute to the Mg(2+) site. A Topo IA-type catalytic domain is found at 124–610; sequence DKNLVDAQKA…DFYDKLKPIV (487 aa). The interval 158 to 163 is interaction with DNA; it reads SAGRVQ. Tyr-302 acts as the O-(5'-phospho-DNA)-tyrosine intermediate in catalysis. Residues 802-854 are disordered; it reads KSAPKGGSKTIRKPSQTKYSQTKSTKSTKSTKSTNKKFVGKSAKKTTKKTTKK. Over residues 814–834 the composition is skewed to low complexity; the sequence is KPSQTKYSQTKSTKSTKSTKS. Basic residues predominate over residues 835 to 854; the sequence is TNKKFVGKSAKKTTKKTTKK.

It belongs to the type IA topoisomerase family. The cofactor is Mg(2+).

It is found in the virion. The catalysed reaction is ATP-independent breakage of single-stranded DNA, followed by passage and rejoining.. Its function is as follows. Releases the supercoiling and torsional tension of DNA, which is introduced during the DNA replication and transcription, by transiently cleaving and rejoining one strand of the DNA duplex. Introduces a single-strand break via transesterification at a target site in duplex DNA. The scissile phosphodiester is attacked by the catalytic tyrosine of the enzyme, resulting in the formation of a DNA-(5'-phosphotyrosyl)-enzyme intermediate and the expulsion of a 3'-OH DNA strand. The free DNA strand then undergoes passage around the unbroken strand, thus removing DNA supercoils. Finally, in the religation step, the DNA 3'-OH attacks the covalent intermediate to expel the active-site tyrosine and restore the DNA phosphodiester backbone. This is DNA topoisomerase 1 type prokaryotic (TOP1P) from Acanthamoeba polyphaga (Amoeba).